The chain runs to 445 residues: 2-oxoisovalerate dehydrogenase subunit alpha, mitochondrial (445 aa).

The transit peptide at 1–45 (MAVAIAAARVWRLNRGLSQAALLLLRQPGARGLARSHPPRQQQQF) directs the protein to the mitochondrion. The interval 33–52 (LARSHPPRQQQQFSSLDDKP) is disordered. The thiamine diphosphate site is built by tyrosine 158 and arginine 159. Serine 206 contributes to the K(+) binding site. Serine 207 serves as a coordination point for thiamine diphosphate. K(+) is bound by residues proline 208, threonine 211, and glutamine 212. Glutamate 238 provides a ligand contact to Mg(2+). Thiamine diphosphate is bound by residues glycine 239, alanine 240, and arginine 265. Mg(2+)-binding residues include asparagine 267 and tyrosine 269. Histidine 336 contacts thiamine diphosphate. Serine 337 is modified (phosphoserine; by BCKDK). The residue at position 338 (threonine 338) is a Phosphothreonine. Phosphoserine occurs at positions 339 and 347. Lysine 356 carries the N6-acetyllysine; alternate modification. Lysine 356 is modified (N6-succinyllysine; alternate). Residue lysine 380 is modified to N6-succinyllysine.

Belongs to the BCKDHA family. Heterotetramer of 2 alpha/BCKDHA and 2 beta chains/BCKDHB that forms the branched-chain alpha-keto acid decarboxylase (E1) component of the BCKD complex. The branched-chain alpha-ketoacid dehydrogenase is a large complex composed of three major building blocks E1, E2 and E3. It is organized around E2, a 24-meric cubic core composed of DBT, to which are associated 6 to 12 copies of E1, and approximately 6 copies of the dehydrogenase E3, a DLD dimer. Interacts with PPM1K. Thiamine diphosphate is required as a cofactor. Mg(2+) serves as cofactor. In terms of processing, phosphorylated at Ser-337 by BCKDK and dephosphorylated by protein phosphatase PPM1K.

The protein localises to the mitochondrion matrix. The enzyme catalyses N(6)-[(R)-lipoyl]-L-lysyl-[protein] + 3-methyl-2-oxobutanoate + H(+) = N(6)-[(R)-S(8)-2-methylpropanoyldihydrolipoyl]-L-lysyl-[protein] + CO2. In terms of biological role, together with BCKDHB forms the heterotetrameric E1 subunit of the mitochondrial branched-chain alpha-ketoacid dehydrogenase (BCKD) complex. The BCKD complex catalyzes the multi-step oxidative decarboxylation of alpha-ketoacids derived from the branched-chain amino-acids valine, leucine and isoleucine producing CO2 and acyl-CoA which is subsequently utilized to produce energy. The E1 subunit catalyzes the first step with the decarboxylation of the alpha-ketoacid forming an enzyme-product intermediate. A reductive acylation mediated by the lipoylamide cofactor of E2 extracts the acyl group from the E1 active site for the next step of the reaction. This is 2-oxoisovalerate dehydrogenase subunit alpha, mitochondrial from Homo sapiens (Human).